We begin with the raw amino-acid sequence, 1510 residues long: Chromosome partition protein MukB (1510 aa).

The stretch at 6 to 30 (ELENEIELESDEVIMENENVEEIVD) forms a coiled coil. 75–82 (GGNGAGKS) contacts ATP. Coiled coils occupy residues 346–506 (QHRL…HKMS), 553–611 (QQTP…EDIS), 673–706 (MQSQ…RLSQ), 821–846 (SAAR…AQIA), 876–1064 (EALM…IQLQ), 1094–1149 (ERAR…RELV), and 1249–1304 (DAIE…LQNI). The interval 707–824 (PDGSEDPRLN…EIPLFGSAAR (118 aa)) is flexible hinge.

Belongs to the SMC family. MukB subfamily. As to quaternary structure, homodimerization via its hinge domain. Binds to DNA via its C-terminal region. Interacts, and probably forms a ternary complex, with MukE and MukF via its C-terminal region. The complex formation is stimulated by calcium or magnesium. Interacts with tubulin-related protein FtsZ.

It localises to the cytoplasm. Its subcellular location is the nucleoid. Functionally, plays a central role in chromosome condensation, segregation and cell cycle progression. Functions as a homodimer, which is essential for chromosome partition. Involved in negative DNA supercoiling in vivo, and by this means organize and compact chromosomes. May achieve or facilitate chromosome segregation by condensation DNA from both sides of a centrally located replisome during cell division. The polypeptide is Chromosome partition protein MukB (Haemophilus influenzae (strain PittGG)).